A 138-amino-acid polypeptide reads, in one-letter code: Mu-like prophage FluMu G protein 2 (138 aa).

It to phage Mu protein G.

This chain is Mu-like prophage FluMu G protein 2, found in Haemophilus influenzae (strain ATCC 51907 / DSM 11121 / KW20 / Rd).